A 74-amino-acid polypeptide reads, in one-letter code: MEMRKSCGFFFLLLLLVFASQVVVQTEGRVCESQSHGFHGLCNRDHNCALVCRNEGFSGGRCKRSRRCFCTRIC.

Positions 1 to 28 (MEMRKSCGFFFLLLLLVFASQVVVQTEG) are cleaved as a signal peptide. 4 cysteine pairs are disulfide-bonded: Cys-31-Cys-74, Cys-42-Cys-62, Cys-48-Cys-68, and Cys-52-Cys-70.

This sequence belongs to the DEFL family. Protease inhibitor I18 (RTI/MTI-2) subfamily.

It is found in the secreted. The chain is Defensin-like protein from Glycine max (Soybean).